The following is a 635-amino-acid chain: Extracellular metalloproteinase mep (635 aa).

Positions methionine 1–alanine 19 are cleaved as a signal peptide. The propeptide occupies histidine 20–glutamate 246. An N-linked (GlcNAc...) asparagine glycan is attached at asparagine 287. Over residues threonine 290 to leucine 309 the composition is skewed to polar residues. Positions threonine 290–asparagine 311 are disordered. Histidine 430 provides a ligand contact to Zn(2+). Glutamate 431 is a catalytic residue. Histidine 434 serves as a coordination point for Zn(2+).

It belongs to the peptidase M36 family. Requires Zn(2+) as cofactor.

It localises to the secreted. Functionally, secreted metalloproteinase that allows assimilation of proteinaceous substrates. This Aspergillus flavus (strain ATCC 200026 / FGSC A1120 / IAM 13836 / NRRL 3357 / JCM 12722 / SRRC 167) protein is Extracellular metalloproteinase mep (mep).